The chain runs to 149 residues: 3-dehydroquinate dehydratase (149 aa).

The active-site Proton acceptor is tyrosine 23. 3 residues coordinate substrate: asparagine 75, histidine 81, and aspartate 88. Catalysis depends on histidine 101, which acts as the Proton donor. Substrate-binding positions include 102-103 and arginine 112; that span reads MS.

Belongs to the type-II 3-dehydroquinase family. As to quaternary structure, homododecamer.

It carries out the reaction 3-dehydroquinate = 3-dehydroshikimate + H2O. It participates in metabolic intermediate biosynthesis; chorismate biosynthesis; chorismate from D-erythrose 4-phosphate and phosphoenolpyruvate: step 3/7. Catalyzes a trans-dehydration via an enolate intermediate. The protein is 3-dehydroquinate dehydratase of Pelobacter propionicus (strain DSM 2379 / NBRC 103807 / OttBd1).